Reading from the N-terminus, the 386-residue chain is Bifunctional enzyme IspD/IspF (386 aa).

A 2-C-methyl-D-erythritol 4-phosphate cytidylyltransferase region spans residues 1–231; that stretch reads MKNGAVIIPA…REKKEPMQKI (231 aa). Residues 232-386 form a 2-C-methyl-D-erythritol 2,4-cyclodiphosphate synthase region; it reads RIGHGFDAHQ…SCHAVVLLQQ (155 aa). A divalent metal cation is bound by residues aspartate 238 and histidine 240. 4-CDP-2-C-methyl-D-erythritol 2-phosphate-binding positions include 238–240 and 264–265; these read DAH and HS. Histidine 272 is an a divalent metal cation binding site. 4-CDP-2-C-methyl-D-erythritol 2-phosphate contacts are provided by residues 286–288, 362–365, tyrosine 369, and arginine 372; these read DIG and TTTE.

The protein in the N-terminal section; belongs to the IspD/TarI cytidylyltransferase family. IspD subfamily. This sequence in the C-terminal section; belongs to the IspF family. The cofactor is a divalent metal cation.

The catalysed reaction is 2-C-methyl-D-erythritol 4-phosphate + CTP + H(+) = 4-CDP-2-C-methyl-D-erythritol + diphosphate. It catalyses the reaction 4-CDP-2-C-methyl-D-erythritol 2-phosphate = 2-C-methyl-D-erythritol 2,4-cyclic diphosphate + CMP. It participates in isoprenoid biosynthesis; isopentenyl diphosphate biosynthesis via DXP pathway; isopentenyl diphosphate from 1-deoxy-D-xylulose 5-phosphate: step 2/6. Its pathway is isoprenoid biosynthesis; isopentenyl diphosphate biosynthesis via DXP pathway; isopentenyl diphosphate from 1-deoxy-D-xylulose 5-phosphate: step 4/6. Bifunctional enzyme that catalyzes the formation of 4-diphosphocytidyl-2-C-methyl-D-erythritol from CTP and 2-C-methyl-D-erythritol 4-phosphate (MEP) (IspD), and catalyzes the conversion of 4-diphosphocytidyl-2-C-methyl-D-erythritol 2-phosphate (CDP-ME2P) to 2-C-methyl-D-erythritol 2,4-cyclodiphosphate (ME-CPP) with a corresponding release of cytidine 5-monophosphate (CMP) (IspF). The chain is Bifunctional enzyme IspD/IspF from Desulfotalea psychrophila (strain LSv54 / DSM 12343).